We begin with the raw amino-acid sequence, 95 residues long: UPF0473 protein GWCH70_2487 (95 aa).

Belongs to the UPF0473 family.

This is UPF0473 protein GWCH70_2487 from Geobacillus sp. (strain WCH70).